The primary structure comprises 310 residues: L-lactate dehydrogenase (310 aa).

NAD(+) contacts are provided by residues valine 17, aspartate 38, lysine 43, tyrosine 69, and 83-84; that span reads GA. Glutamine 86 and arginine 92 together coordinate substrate. NAD(+)-binding positions include serine 105, 122–124, and serine 147; that span reads ATN. Substrate is bound at residue 124-127; that stretch reads NPVD. Substrate is bound at residue 152–155; sequence DTAR. Beta-D-fructose 1,6-bisphosphate contacts are provided by arginine 157 and histidine 172. Catalysis depends on histidine 179, which acts as the Proton acceptor. Position 218 is a phosphotyrosine (tyrosine 218). Threonine 227 is a substrate binding site.

This sequence belongs to the LDH/MDH superfamily. LDH family. In terms of assembly, homotetramer.

It is found in the cytoplasm. The enzyme catalyses (S)-lactate + NAD(+) = pyruvate + NADH + H(+). It participates in fermentation; pyruvate fermentation to lactate; (S)-lactate from pyruvate: step 1/1. With respect to regulation, allosterically activated by fructose 1,6-bisphosphate (FBP). Its function is as follows. Catalyzes the conversion of lactate to pyruvate. This chain is L-lactate dehydrogenase, found in Halalkalibacterium halodurans (strain ATCC BAA-125 / DSM 18197 / FERM 7344 / JCM 9153 / C-125) (Bacillus halodurans).